Reading from the N-terminus, the 383-residue chain is 3-dehydroquinate synthase (383 aa).

NAD(+) contacts are provided by residues 81-86 (EGEVSK), 115-119 (GVVGD), 139-140 (TS), K152, and K161. Zn(2+) is bound by residues E194, H256, and H274.

Belongs to the sugar phosphate cyclases superfamily. Dehydroquinate synthase family. It depends on Co(2+) as a cofactor. The cofactor is Zn(2+). Requires NAD(+) as cofactor.

It is found in the cytoplasm. The catalysed reaction is 7-phospho-2-dehydro-3-deoxy-D-arabino-heptonate = 3-dehydroquinate + phosphate. It functions in the pathway metabolic intermediate biosynthesis; chorismate biosynthesis; chorismate from D-erythrose 4-phosphate and phosphoenolpyruvate: step 2/7. In terms of biological role, catalyzes the conversion of 3-deoxy-D-arabino-heptulosonate 7-phosphate (DAHP) to dehydroquinate (DHQ). The polypeptide is 3-dehydroquinate synthase (Nitrobacter hamburgensis (strain DSM 10229 / NCIMB 13809 / X14)).